We begin with the raw amino-acid sequence, 243 residues long: UPF0173 metal-dependent hydrolase Xaut_3786 (243 aa).

Belongs to the UPF0173 family.

The chain is UPF0173 metal-dependent hydrolase Xaut_3786 from Xanthobacter autotrophicus (strain ATCC BAA-1158 / Py2).